Reading from the N-terminus, the 544-residue chain is Putative ankyrin repeat protein L289 (544 aa).

ANK repeat units follow at residues Lys31–Glu71, His72–Ile105, Tyr110–His143, Leu147–Ser181, Gln185–Ile218, Lys222–Phe255, Tyr259–Ile297, Asp300–Ser339, Asn340–Ile374, Gln378–Asn413, and Thr414–Lys447.

The protein is Putative ankyrin repeat protein L289 of Acanthamoeba polyphaga mimivirus (APMV).